Consider the following 201-residue polypeptide: LexA repressor (201 aa).

The H-T-H motif DNA-binding region spans 28–48; it reads LREIAAKLGISGTLGVMKHLE. Active-site for autocatalytic cleavage activity residues include Ser120 and Lys157.

Belongs to the peptidase S24 family. Homodimer.

It carries out the reaction Hydrolysis of Ala-|-Gly bond in repressor LexA.. Its function is as follows. Represses a number of genes involved in the response to DNA damage (SOS response), including recA and lexA. In the presence of single-stranded DNA, RecA interacts with LexA causing an autocatalytic cleavage which disrupts the DNA-binding part of LexA, leading to derepression of the SOS regulon and eventually DNA repair. This is LexA repressor from Geobacter sp. (strain M21).